We begin with the raw amino-acid sequence, 367 residues long: Protein-glutamate methylesterase/protein-glutamine glutaminase 2 (367 aa).

The 118-residue stretch at 15–132 (RALIVDDSAL…SQSMHEMAEE (118 aa)) folds into the Response regulatory domain. Asp-66 is modified (4-aspartylphosphate). The CheB-type methylesterase domain maps to 172–367 (KTSVRNVLAI…MADEIVKIVR (196 aa)). Active-site residues include Ser-184, His-211, and Asp-311.

The protein belongs to the CheB family. Post-translationally, phosphorylated by CheA. Phosphorylation of the N-terminal regulatory domain activates the methylesterase activity.

It localises to the cytoplasm. It carries out the reaction [protein]-L-glutamate 5-O-methyl ester + H2O = L-glutamyl-[protein] + methanol + H(+). The enzyme catalyses L-glutaminyl-[protein] + H2O = L-glutamyl-[protein] + NH4(+). Involved in chemotaxis. Part of a chemotaxis signal transduction system that modulates chemotaxis in response to various stimuli. Catalyzes the demethylation of specific methylglutamate residues introduced into the chemoreceptors (methyl-accepting chemotaxis proteins or MCP) by CheR. Also mediates the irreversible deamidation of specific glutamine residues to glutamic acid. The protein is Protein-glutamate methylesterase/protein-glutamine glutaminase 2 of Methanosarcina mazei (strain ATCC BAA-159 / DSM 3647 / Goe1 / Go1 / JCM 11833 / OCM 88) (Methanosarcina frisia).